Here is a 106-residue protein sequence, read N- to C-terminus: HIG1 domain family member 2A (106 aa).

Alanine 2 bears the N-acetylalanine mark. The HIG1 domain maps to 20-106; sequence VIEGFSPTVY…LAASAMKSQA (87 aa). Helical transmembrane passes span 47–67 and 83–103; these read PMVP…LYCF and IAAQ…SAMK.

Associates with cytochrome c oxidase (COX, complex IV); proposed complex component.

The protein localises to the mitochondrion membrane. The protein resides in the mitochondrion inner membrane. Functionally, proposed subunit of cytochrome c oxidase (COX, complex IV), which is the terminal component of the mitochondrial respiratory chain that catalyzes the reduction of oxygen to water. May be involved in cytochrome c oxidase activity. May play a role in the assembly of respiratory supercomplexes. The chain is HIG1 domain family member 2A (Higd2a) from Mus musculus (Mouse).